A 465-amino-acid polypeptide reads, in one-letter code: MSPGIVSQEVNGRQEPTEAARDERHGRRRRVAVIGAGLVGSLAALNFARMGNHVDLYEYREDIRQALVVQGRSINLALSQRGRKALAAVGLEQEVLATAIPMRGRMLHDVRGNSSVVLYDPINNQCLYSVGRRQLNEVLLNACDKLPNIRCHFEHKLTSANLREGSMEFRNPAKEAVAAHADLIVGCDGAFSSVRQNNVRLPGFNYSQEYIETGYLELCIPSKSGDFQMPANYLHIWPRNTFMMIALPNQDKSFTVTLSMPFEIFAGIQNQNDLLEFFKLNFRDALPLIGEQQLIKDFFKTRPQFLVSIKCRPYHYADKALILGDAAHAMVPYYGQGMNAGMEDVTLLTDILAKQLPLDETLALFTESRWQDAFAICDLAMYNYVEMRDLTKRWTFRLRKWLDTLLFRLFPGWIPLYNSVSFSSMPYRQCIANRKWQDQLLKRIFGATFLAAIVTGGAIYAQRFL.

Positions 1–26 (MSPGIVSQEVNGRQEPTEAARDERHG) are disordered. Positions 15–25 (EPTEAARDERH) are enriched in basic and acidic residues. 2 helical membrane-spanning segments follow: residues 405 to 427 (LLFR…SMPY) and 440 to 462 (LLKR…IYAQ).

This sequence belongs to the aromatic-ring hydroxylase family. KMO subfamily. Requires FAD as cofactor.

The protein resides in the mitochondrion. Its subcellular location is the membrane. The enzyme catalyses L-kynurenine + NADPH + O2 + H(+) = 3-hydroxy-L-kynurenine + NADP(+) + H2O. It participates in cofactor biosynthesis; NAD(+) biosynthesis; quinolinate from L-kynurenine: step 1/3. Catalyzes the hydroxylation of L-kynurenine (L-Kyn) to form 3-hydroxy-L-kynurenine (L-3OHKyn). Required for synthesis of quinolinic acid. The sequence is that of Kynurenine 3-monooxygenase from Drosophila melanogaster (Fruit fly).